The primary structure comprises 153 residues: Histone H2B.8 (153 aa).

Basic and acidic residues-rich tracts occupy residues 1 to 28 (MAPK…EKAP) and 36 to 53 (EKRL…EGKK). Residues 1 to 61 (MAPKAEKKPA…KKAGRKKAKK (61 aa)) are disordered. N6-acetyllysine is present on residues lysine 7 and lysine 37. A Glycyl lysine isopeptide (Lys-Gly) (interchain with G-Cter in ubiquitin) cross-link involves residue lysine 149.

This sequence belongs to the histone H2B family. The nucleosome is a histone octamer containing two molecules each of H2A, H2B, H3 and H4 assembled in one H3-H4 heterotetramer and two H2A-H2B heterodimers. The octamer wraps approximately 147 bp of DNA. In terms of processing, can be acetylated to form H2BK6ac and H2BK33ac. Monoubiquitinated by BRE1 to form H2BK143ub1 and deubiquitinated by UBP26. Required for heterochromatic histone H3 di- and trimethylation at H3K4me. May give a specific tag for epigenetic transcriptional activation.

It localises to the nucleus. It is found in the chromosome. In terms of biological role, core component of nucleosome. Nucleosomes wrap and compact DNA into chromatin, limiting DNA accessibility to the cellular machineries which require DNA as a template. Histones thereby play a central role in transcription regulation, DNA repair, DNA replication and chromosomal stability. DNA accessibility is regulated via a complex set of post-translational modifications of histones, also called histone code, and nucleosome remodeling. This is Histone H2B.8 (H2B.8) from Oryza sativa subsp. indica (Rice).